The chain runs to 122 residues: Large ribosomal subunit protein uL24 (122 aa).

This sequence belongs to the universal ribosomal protein uL24 family. As to quaternary structure, part of the 50S ribosomal subunit.

One of two assembly initiator proteins, it binds directly to the 5'-end of the 23S rRNA, where it nucleates assembly of the 50S subunit. In terms of biological role, located at the polypeptide exit tunnel on the outside of the subunit. The sequence is that of Large ribosomal subunit protein uL24 from Methanosarcina mazei (strain ATCC BAA-159 / DSM 3647 / Goe1 / Go1 / JCM 11833 / OCM 88) (Methanosarcina frisia).